We begin with the raw amino-acid sequence, 711 residues long: Ribosomal RNA large subunit methyltransferase K/L (711 aa).

One can recognise a THUMP domain in the interval aspartate 42–leucine 153.

The protein belongs to the methyltransferase superfamily. RlmKL family.

The protein localises to the cytoplasm. It catalyses the reaction guanosine(2445) in 23S rRNA + S-adenosyl-L-methionine = N(2)-methylguanosine(2445) in 23S rRNA + S-adenosyl-L-homocysteine + H(+). The enzyme catalyses guanosine(2069) in 23S rRNA + S-adenosyl-L-methionine = N(2)-methylguanosine(2069) in 23S rRNA + S-adenosyl-L-homocysteine + H(+). Specifically methylates the guanine in position 2445 (m2G2445) and the guanine in position 2069 (m7G2069) of 23S rRNA. The protein is Ribosomal RNA large subunit methyltransferase K/L of Xanthomonas campestris pv. campestris (strain B100).